The following is a 162-amino-acid chain: ATP synthase subunit b 1 (162 aa).

The chain crosses the membrane as a helical span at residues 1–21; sequence MLLTAEFWVAVAFVAFLVIVW.

The protein belongs to the ATPase B chain family. As to quaternary structure, F-type ATPases have 2 components, F(1) - the catalytic core - and F(0) - the membrane proton channel. F(1) has five subunits: alpha(3), beta(3), gamma(1), delta(1), epsilon(1). F(0) has three main subunits: a(1), b(2) and c(10-14). The alpha and beta chains form an alternating ring which encloses part of the gamma chain. F(1) is attached to F(0) by a central stalk formed by the gamma and epsilon chains, while a peripheral stalk is formed by the delta and b chains.

The protein localises to the cell inner membrane. In terms of biological role, f(1)F(0) ATP synthase produces ATP from ADP in the presence of a proton or sodium gradient. F-type ATPases consist of two structural domains, F(1) containing the extramembraneous catalytic core and F(0) containing the membrane proton channel, linked together by a central stalk and a peripheral stalk. During catalysis, ATP synthesis in the catalytic domain of F(1) is coupled via a rotary mechanism of the central stalk subunits to proton translocation. Functionally, component of the F(0) channel, it forms part of the peripheral stalk, linking F(1) to F(0). This Methylorubrum extorquens (strain PA1) (Methylobacterium extorquens) protein is ATP synthase subunit b 1.